Reading from the N-terminus, the 345-residue chain is Methylthioribose-1-phosphate isomerase (345 aa).

Substrate contacts are provided by residues 44-46, R86, and Q194; that span reads RGA. D235 functions as the Proton donor in the catalytic mechanism. 245-246 lines the substrate pocket; it reads NK.

This sequence belongs to the eIF-2B alpha/beta/delta subunits family. MtnA subfamily.

The catalysed reaction is 5-(methylsulfanyl)-alpha-D-ribose 1-phosphate = 5-(methylsulfanyl)-D-ribulose 1-phosphate. It functions in the pathway amino-acid biosynthesis; L-methionine biosynthesis via salvage pathway; L-methionine from S-methyl-5-thio-alpha-D-ribose 1-phosphate: step 1/6. Catalyzes the interconversion of methylthioribose-1-phosphate (MTR-1-P) into methylthioribulose-1-phosphate (MTRu-1-P). In Desulfitobacterium hafniense (strain DSM 10664 / DCB-2), this protein is Methylthioribose-1-phosphate isomerase.